We begin with the raw amino-acid sequence, 349 residues long: Flagellar P-ring protein (349 aa).

Residues 1-16 form the signal peptide; that stretch reads MKYFFIIALLLSSLYS.

Belongs to the FlgI family. In terms of assembly, the basal body constitutes a major portion of the flagellar organelle and consists of four rings (L,P,S, and M) mounted on a central rod.

It localises to the periplasm. The protein resides in the bacterial flagellum basal body. In terms of biological role, assembles around the rod to form the L-ring and probably protects the motor/basal body from shearing forces during rotation. The protein is Flagellar P-ring protein of Aliarcobacter butzleri (strain RM4018) (Arcobacter butzleri).